Here is a 137-residue protein sequence, read N- to C-terminus: uncharacterized protein (137 aa).

The protein belongs to the ycf72 family.

It localises to the plastid. It is found in the chloroplast. This is an uncharacterized protein from Oryza nivara (Indian wild rice).